The sequence spans 107 residues: CLAVATA3/ESR (CLE)-related protein 10 (107 aa).

The N-terminal stretch at 1–23 is a signal peptide; the sequence is MKTNRNRPINILIVFFLLTTARA. N-linked (GlcNAc...) asparagine glycans are attached at residues Asn27 and Asn30. Residues 73–107 are disordered; the sequence is SRQPLFSPPPPPTEIDQRYGVEKRLVPSGPNPLHN. The span at 87-97 shows a compositional bias: basic and acidic residues; it reads IDQRYGVEKRL. Hydroxyproline is present on residues Pro99 and Pro102. O-linked (Ara...) hydroxyproline glycosylation is present at Pro102.

The protein belongs to the CLV3/ESR signal peptide family. The O-glycosylation (arabinosylation) of the hydroxyproline Pro-102 enhances binding affinity of the CLE10p peptide for its receptor. As to expression, expressed in stems, apex, leaves, flowers, siliques and pollen.

Its subcellular location is the secreted. The protein localises to the extracellular space. Its function is as follows. Extracellular signal peptide that regulates cell fate. Represses root apical meristem maintenance. Regulates the transition of protophloem cells from proliferation to differentiation, thus impinging on postembryonic growth capacity of the root meristem; this signaling pathway requires CRN and CLV2. The chain is CLAVATA3/ESR (CLE)-related protein 10 from Arabidopsis thaliana (Mouse-ear cress).